The primary structure comprises 239 residues: MKVTLFVTCLVDMFETNVGKATVEVLERLGCEIEFPEAQVCCGQPAYNSGHVEAAKEAMKHMIETFEDAEYIVTPSGSCATMFHEYPHVFKDDPKWAKRAQKVADKTYEFTQFIVDVLKVTDVGASLPGIATIHKSCHMTRMLGVKEAPGILLSNVKGLTVRDLPNVQNCCGFGGTFSVKMTPISEQMVDEKVDSVMETGADYLIGADCGCLLNIGGRIERLGKEVKVMHIAEVLNSRS.

This sequence belongs to the LutA/YkgE family.

Functionally, is involved in L-lactate degradation and allows cells to grow with lactate as the sole carbon source. The sequence is that of Lactate utilization protein A from Bacillus cereus (strain B4264).